We begin with the raw amino-acid sequence, 275 residues long: Hemin import ATP-binding protein HmuV (275 aa).

Positions 2–242 (LKAAGIGVRL…EWIETGFGLQ (241 aa)) constitute an ABC transporter domain. Position 34–41 (34–41 (GPNGAGKS)) interacts with ATP.

It belongs to the ABC transporter superfamily. Heme (hemin) importer (TC 3.A.1.14.5) family. In terms of assembly, the complex is composed of two ATP-binding proteins (HmuV), two transmembrane proteins (HmuU) and a solute-binding protein (HmuT).

Its subcellular location is the cell inner membrane. Functionally, part of the ABC transporter complex HmuTUV involved in hemin import. Responsible for energy coupling to the transport system. This Gloeobacter violaceus (strain ATCC 29082 / PCC 7421) protein is Hemin import ATP-binding protein HmuV.